Here is a 241-residue protein sequence, read N- to C-terminus: Protein-L-isoaspartate O-methyltransferase (241 aa).

Ser69 is an active-site residue.

Belongs to the methyltransferase superfamily. L-isoaspartyl/D-aspartyl protein methyltransferase family.

It is found in the cytoplasm. The enzyme catalyses [protein]-L-isoaspartate + S-adenosyl-L-methionine = [protein]-L-isoaspartate alpha-methyl ester + S-adenosyl-L-homocysteine. Its function is as follows. Catalyzes the methyl esterification of L-isoaspartyl residues in peptides and proteins that result from spontaneous decomposition of normal L-aspartyl and L-asparaginyl residues. It plays a role in the repair and/or degradation of damaged proteins. The protein is Protein-L-isoaspartate O-methyltransferase of Hyperthermus butylicus (strain DSM 5456 / JCM 9403 / PLM1-5).